Consider the following 527-residue polypeptide: Heat shock factor protein HSF8 (527 aa).

Residues 39 to 133 mediate DNA binding; sequence PFLVKTYDMV…KSISRRKPAH (95 aa). 3 disordered regions span residues 128–158, 241–273, and 297–341; these read RRKPAHGHAQQQQQPHGNAQQQMQPPGHSAS, NESNKRIAEGSKKRRIKQDIESQDPSVTPADGQ, and SSPR…TSGK. Positions 134 to 152 are enriched in low complexity; it reads GHAQQQQQPHGNAQQQMQP. The segment covering 317-326 has biased composition (polar residues); sequence SPQSNASSGR.

This sequence belongs to the HSF family. Homotrimer. Exhibits temperature-dependent phosphorylation.

It localises to the nucleus. DNA-binding protein that specifically binds heat shock promoter elements (HSE) and activates transcription. This chain is Heat shock factor protein HSF8 (HSF8), found in Solanum lycopersicum (Tomato).